An 884-amino-acid chain; its full sequence is DNA mismatch repair protein MutS (884 aa).

601-608 lines the ATP pocket; it reads GPNMSGKS. A disordered region spans residues 826–845; the sequence is ESQLSFFGGEQSSKKQDKPL.

Belongs to the DNA mismatch repair MutS family.

This protein is involved in the repair of mismatches in DNA. It is possible that it carries out the mismatch recognition step. This protein has a weak ATPase activity. The polypeptide is DNA mismatch repair protein MutS (Bacillus cereus (strain ATCC 14579 / DSM 31 / CCUG 7414 / JCM 2152 / NBRC 15305 / NCIMB 9373 / NCTC 2599 / NRRL B-3711)).